We begin with the raw amino-acid sequence, 213 residues long: 2-C-methyl-D-erythritol 4-phosphate cytidylyltransferase (213 aa).

It belongs to the IspD/TarI cytidylyltransferase family. IspD subfamily.

It catalyses the reaction 2-C-methyl-D-erythritol 4-phosphate + CTP + H(+) = 4-CDP-2-C-methyl-D-erythritol + diphosphate. The protein operates within isoprenoid biosynthesis; isopentenyl diphosphate biosynthesis via DXP pathway; isopentenyl diphosphate from 1-deoxy-D-xylulose 5-phosphate: step 2/6. Its function is as follows. Catalyzes the formation of 4-diphosphocytidyl-2-C-methyl-D-erythritol from CTP and 2-C-methyl-D-erythritol 4-phosphate (MEP). The sequence is that of 2-C-methyl-D-erythritol 4-phosphate cytidylyltransferase from Thermus thermophilus (strain ATCC BAA-163 / DSM 7039 / HB27).